Here is a 199-residue protein sequence, read N- to C-terminus: A-type ATP synthase subunit E (199 aa).

The protein belongs to the V-ATPase E subunit family. In terms of assembly, has multiple subunits with at least A(3), B(3), C, D, E, F, H, I and proteolipid K(x).

It is found in the cell membrane. In terms of biological role, component of the A-type ATP synthase that produces ATP from ADP in the presence of a proton gradient across the membrane. In Pyrococcus abyssi (strain GE5 / Orsay), this protein is A-type ATP synthase subunit E.